Reading from the N-terminus, the 178-residue chain is MRVLGIDPGSRITGYGLVEQHGSRLVHLDNGAVFTDKAKDFPDRLRLIFEGLSRVIAEYAPDAVAVEDVYVSENVRAALKLGQARGAAIAAAVHAGLPVFEYTASQVKQAVVGQGRAGKEQVQKMVKALLGLPEIAQADASDAVAVAICHINSYQLRLQAGPAVATSRRASSWRNYRP.

Catalysis depends on residues Asp-7, Glu-67, and Asp-139. The Mg(2+) site is built by Asp-7, Glu-67, and Asp-139.

This sequence belongs to the RuvC family. As to quaternary structure, homodimer which binds Holliday junction (HJ) DNA. The HJ becomes 2-fold symmetrical on binding to RuvC with unstacked arms; it has a different conformation from HJ DNA in complex with RuvA. In the full resolvosome a probable DNA-RuvA(4)-RuvB(12)-RuvC(2) complex forms which resolves the HJ. Requires Mg(2+) as cofactor.

The protein resides in the cytoplasm. It carries out the reaction Endonucleolytic cleavage at a junction such as a reciprocal single-stranded crossover between two homologous DNA duplexes (Holliday junction).. In terms of biological role, the RuvA-RuvB-RuvC complex processes Holliday junction (HJ) DNA during genetic recombination and DNA repair. Endonuclease that resolves HJ intermediates. Cleaves cruciform DNA by making single-stranded nicks across the HJ at symmetrical positions within the homologous arms, yielding a 5'-phosphate and a 3'-hydroxyl group; requires a central core of homology in the junction. The consensus cleavage sequence is 5'-(A/T)TT(C/G)-3'. Cleavage occurs on the 3'-side of the TT dinucleotide at the point of strand exchange. HJ branch migration catalyzed by RuvA-RuvB allows RuvC to scan DNA until it finds its consensus sequence, where it cleaves and resolves the cruciform DNA. This chain is Crossover junction endodeoxyribonuclease RuvC, found in Trichlorobacter lovleyi (strain ATCC BAA-1151 / DSM 17278 / SZ) (Geobacter lovleyi).